Consider the following 39-residue polypeptide: Natriuretic peptide HsNP-a (39 aa).

Residues 1–8 (SGSKTAKI) constitute a propeptide that is removed on maturation. Cys-12 and Cys-28 are oxidised to a cystine.

The protein belongs to the natriuretic peptide family. Expressed by the venom gland.

It is found in the secreted. Its function is as follows. Snake venom natriuretic peptide that targets both NPR1 and NPR2. Exhibits hypotensive and vasodepressor activities. This Hoplocephalus stephensii (Stephens's banded snake) protein is Natriuretic peptide HsNP-a.